The primary structure comprises 145 residues: Transcription antitermination protein NusB (145 aa).

It belongs to the NusB family.

Involved in transcription antitermination. Required for transcription of ribosomal RNA (rRNA) genes. Binds specifically to the boxA antiterminator sequence of the ribosomal RNA (rrn) operons. This chain is Transcription antitermination protein NusB, found in Burkholderia lata (strain ATCC 17760 / DSM 23089 / LMG 22485 / NCIMB 9086 / R18194 / 383).